Consider the following 544-residue polypeptide: CTP synthase (544 aa).

The tract at residues 1–265 (MTRYIFITGG…DTQVLAYFGL (265 aa)) is amidoligase domain. Ser-13 serves as a coordination point for CTP. UTP is bound at residue Ser-13. Position 14 to 19 (14 to 19 (SLGKGL)) interacts with ATP. Tyr-54 lines the L-glutamine pocket. Position 71 (Asp-71) interacts with ATP. The Mg(2+) site is built by Asp-71 and Glu-139. CTP-binding positions include 146-148 (DIE), 186-191 (KTKPTQ), and Lys-222. Residues 186 to 191 (KTKPTQ) and Lys-222 each bind UTP. Position 240 (Val-240) interacts with ATP. The region spanning 291 to 543 (TIAVVGKYTS…IKAAIEQSRL (253 aa)) is the Glutamine amidotransferase type-1 domain. An L-glutamine-binding site is contributed by Gly-353. The active-site Nucleophile; for glutamine hydrolysis is the Cys-380. L-glutamine is bound by residues 381–384 (FGMQ), Glu-404, and Arg-472. Residues His-516 and Glu-518 contribute to the active site.

The protein belongs to the CTP synthase family. As to quaternary structure, homotetramer.

It carries out the reaction UTP + L-glutamine + ATP + H2O = CTP + L-glutamate + ADP + phosphate + 2 H(+). It catalyses the reaction L-glutamine + H2O = L-glutamate + NH4(+). The enzyme catalyses UTP + NH4(+) + ATP = CTP + ADP + phosphate + 2 H(+). It participates in pyrimidine metabolism; CTP biosynthesis via de novo pathway; CTP from UDP: step 2/2. Allosterically activated by GTP, when glutamine is the substrate; GTP has no effect on the reaction when ammonia is the substrate. The allosteric effector GTP functions by stabilizing the protein conformation that binds the tetrahedral intermediate(s) formed during glutamine hydrolysis. Inhibited by the product CTP, via allosteric rather than competitive inhibition. In terms of biological role, catalyzes the ATP-dependent amination of UTP to CTP with either L-glutamine or ammonia as the source of nitrogen. Regulates intracellular CTP levels through interactions with the four ribonucleotide triphosphates. The protein is CTP synthase of Azospirillum brasilense.